Here is a 92-residue protein sequence, read N- to C-terminus: Small ribosomal subunit protein uS19c (92 aa).

This sequence belongs to the universal ribosomal protein uS19 family.

The protein localises to the plastid. It localises to the chloroplast. In terms of biological role, protein S19 forms a complex with S13 that binds strongly to the 16S ribosomal RNA. The polypeptide is Small ribosomal subunit protein uS19c (Calycanthus floridus var. glaucus (Eastern sweetshrub)).